The sequence spans 156 residues: 3-dehydroquinate dehydratase (156 aa).

Tyr-31 acts as the Proton acceptor in catalysis. Substrate is bound by residues Asn-83, His-89, and Asp-96. Residue His-109 is the Proton donor of the active site. Substrate contacts are provided by residues 110-111 and Arg-120; that span reads LS.

This sequence belongs to the type-II 3-dehydroquinase family. Homododecamer.

It carries out the reaction 3-dehydroquinate = 3-dehydroshikimate + H2O. Its pathway is metabolic intermediate biosynthesis; chorismate biosynthesis; chorismate from D-erythrose 4-phosphate and phosphoenolpyruvate: step 3/7. Its function is as follows. Catalyzes a trans-dehydration via an enolate intermediate. The sequence is that of 3-dehydroquinate dehydratase from Chromobacterium violaceum (strain ATCC 12472 / DSM 30191 / JCM 1249 / CCUG 213 / NBRC 12614 / NCIMB 9131 / NCTC 9757 / MK).